Consider the following 763-residue polypeptide: 5-methyltetrahydropteroyltriglutamate--homocysteine methyltransferase (763 aa).

Residues 16–19 and lysine 114 contribute to the 5-methyltetrahydropteroyltri-L-glutamate site; that span reads RELK. L-homocysteine contacts are provided by residues 438–440 and glutamate 491; that span reads IGS. L-methionine is bound by residues 438 to 440 and glutamate 491; that span reads IGS. 5-methyltetrahydropteroyltri-L-glutamate contacts are provided by residues 522–523 and tryptophan 568; that span reads RC. Residue aspartate 606 participates in L-homocysteine binding. Aspartate 606 is a binding site for L-methionine. Glutamate 612 is a binding site for 5-methyltetrahydropteroyltri-L-glutamate. 3 residues coordinate Zn(2+): histidine 648, cysteine 650, and glutamate 672. Residue histidine 701 is the Proton donor of the active site. Cysteine 733 lines the Zn(2+) pocket.

The protein belongs to the vitamin-B12 independent methionine synthase family. It depends on Zn(2+) as a cofactor.

It carries out the reaction 5-methyltetrahydropteroyltri-L-glutamate + L-homocysteine = tetrahydropteroyltri-L-glutamate + L-methionine. It participates in amino-acid biosynthesis; L-methionine biosynthesis via de novo pathway; L-methionine from L-homocysteine (MetE route): step 1/1. In terms of biological role, catalyzes the transfer of a methyl group from 5-methyltetrahydrofolate to homocysteine resulting in methionine formation. This Parvibaculum lavamentivorans (strain DS-1 / DSM 13023 / NCIMB 13966) protein is 5-methyltetrahydropteroyltriglutamate--homocysteine methyltransferase.